Reading from the N-terminus, the 63-residue chain is uncharacterized protein (63 aa).

The helical transmembrane segment at 4–24 (LNQFILIFLLLIVILFIFFLI) threads the bilayer.

The protein localises to the membrane. This is an uncharacterized protein from Invertebrate iridescent virus 6 (IIV-6).